The following is a 273-amino-acid chain: Putative B3 domain-containing protein At5g58280 (273 aa).

The segment at residues 127 to 218 (FVKSMVRSHV…KFKIYVFKGN (92 aa)) is a DNA-binding region (TF-B3). Positions 225-273 (SARKRGRATTPSEEEEEEEDKDVEESGDEEHSSRATKRSSVRLLRKRKA) are disordered. A compositionally biased stretch (acidic residues) spans 236–252 (SEEEEEEEDKDVEESGD). Positions 258-273 (RATKRSSVRLLRKRKA) are enriched in basic residues.

The protein localises to the nucleus. The sequence is that of Putative B3 domain-containing protein At5g58280 from Arabidopsis thaliana (Mouse-ear cress).